A 156-amino-acid polypeptide reads, in one-letter code: Small ribosomal subunit protein uS7 (156 aa).

It belongs to the universal ribosomal protein uS7 family. As to quaternary structure, part of the 30S ribosomal subunit. Contacts proteins S9 and S11.

Its function is as follows. One of the primary rRNA binding proteins, it binds directly to 16S rRNA where it nucleates assembly of the head domain of the 30S subunit. Is located at the subunit interface close to the decoding center, probably blocks exit of the E-site tRNA. The sequence is that of Small ribosomal subunit protein uS7 from Baumannia cicadellinicola subsp. Homalodisca coagulata.